Consider the following 378-residue polypeptide: Alanine racemase (378 aa).

The Proton acceptor; specific for D-alanine role is filled by Lys-40. Lys-40 carries the N6-(pyridoxal phosphate)lysine modification. Residue Arg-140 coordinates substrate. Tyr-270 serves as the catalytic Proton acceptor; specific for L-alanine. Met-317 lines the substrate pocket.

It belongs to the alanine racemase family. Pyridoxal 5'-phosphate serves as cofactor.

It catalyses the reaction L-alanine = D-alanine. It participates in amino-acid biosynthesis; D-alanine biosynthesis; D-alanine from L-alanine: step 1/1. Catalyzes the interconversion of L-alanine and D-alanine. May also act on other amino acids. In Lacticaseibacillus paracasei (strain ATCC 334 / BCRC 17002 / CCUG 31169 / CIP 107868 / KCTC 3260 / NRRL B-441) (Lactobacillus paracasei), this protein is Alanine racemase (alr).